A 124-amino-acid chain; its full sequence is UPF0382 membrane protein HI_1073 (124 aa).

3 helical membrane passes run 6–26, 70–90, and 95–115; these read LTLV…AAHG, SMSS…ALAF, and VIVW…ISLA.

Belongs to the UPF0382 family.

The protein localises to the cell membrane. The sequence is that of UPF0382 membrane protein HI_1073 from Haemophilus influenzae (strain ATCC 51907 / DSM 11121 / KW20 / Rd).